The chain runs to 25 residues: Germin-like protein (25 aa).

It belongs to the germin family.

The chain is Germin-like protein from Populus euphratica (Euphrates poplar).